The following is a 357-amino-acid chain: Solute carrier family 25 member 3 (357 aa).

Residues 1-45 (MFSSVAHLARANPFNAPHLQLVHDGLSGPRSPPAPPRRSRHLAAA) constitute a mitochondrion transit peptide. The Mitochondrial intermembrane portion of the chain corresponds to 46 to 58 (AVEEYSCEFGSMK). Solcar repeat units follow at residues 58-142 (KYYA…FKAL), 155-239 (WRTS…TVEA), and 256-334 (EQLV…VKVY). The chain crosses the membrane as a helical span at residues 59-81 (YYALCGFGGVLSCGLTHTAVVPL). At 82–116 (DLVKCRMQVDPQKYKGIFNGFSITLKEDGVRGLAK) the chain is on the mitochondrial matrix side. The residue at position 94 (Lys94) is an N6-acetyllysine. N6-methyllysine is present on Lys107. The helical transmembrane segment at 117-136 (GWAPTLIGYSMQGLCKFGFY) threads the bilayer. Over 137–156 (EVFKALYSNILGEENTYLWR) the chain is Mitochondrial intermembrane. The chain crosses the membrane as a helical span at residues 157–178 (TSLYLASSASAEFFADIALAPM). The Mitochondrial matrix portion of the chain corresponds to 179 to 213 (EAAKVRIQTQPGYANTLREAVPKMYKEEGLNAFYK). Tyr191 carries the phosphotyrosine modification. An N6-acetyllysine modification is found at Lys204. Residues 214 to 233 (GVAPLWMRQIPYTMMKFACF) form a helical membrane-spanning segment. Topologically, residues 234–256 (ERTVEALYKFVVPKPRSECTKAE) are mitochondrial intermembrane. Residues 257-279 (QLVVTFVAGYIAGVFCAIVSHPA) traverse the membrane as a helical segment. Topologically, residues 280-309 (DSVVSVLNKEKGSTASQVLQRLGFRGVWKG) are mitochondrial matrix. A helical transmembrane segment spans residues 310–328 (LFARIIMIGTLTALQWFIY). The Mitochondrial intermembrane portion of the chain corresponds to 329–357 (DSVKVYFRLPRPPPPEMPESLKKKLGLTE).

The protein belongs to the mitochondrial carrier (TC 2.A.29) family. In terms of assembly, interacts with PPIF; the interaction is impaired by CsA.

The protein resides in the mitochondrion inner membrane. It catalyses the reaction phosphate(in) + H(+)(in) = phosphate(out) + H(+)(out). In terms of biological role, inorganic ion transporter that transports phosphate or copper ions across the mitochondrial inner membrane into the matrix compartment. Mediates proton-coupled symport of phosphate ions necessary for mitochondrial oxidative phosphorylation of ADP to ATP. Transports copper ions probably in the form of anionic copper(I) complexes to maintain mitochondrial matrix copper pool and to supply copper for cytochrome C oxidase complex assembly. May also play a role in regulation of the mitochondrial permeability transition pore (mPTP). The sequence is that of Solute carrier family 25 member 3 from Mus musculus (Mouse).